We begin with the raw amino-acid sequence, 441 residues long: Glutamyl-tRNA reductase (441 aa).

Substrate-binding positions include 64–67 (TCNR), Ser-123, 128–130 (ETQ), and Gln-134. The active-site Nucleophile is Cys-65. Position 203 to 208 (203 to 208 (GAGEMI)) interacts with NADP(+).

Belongs to the glutamyl-tRNA reductase family. Homodimer.

It carries out the reaction (S)-4-amino-5-oxopentanoate + tRNA(Glu) + NADP(+) = L-glutamyl-tRNA(Glu) + NADPH + H(+). Its pathway is porphyrin-containing compound metabolism; protoporphyrin-IX biosynthesis; 5-aminolevulinate from L-glutamyl-tRNA(Glu): step 1/2. Its function is as follows. Catalyzes the NADPH-dependent reduction of glutamyl-tRNA(Glu) to glutamate 1-semialdehyde (GSA). The protein is Glutamyl-tRNA reductase of Burkholderia pseudomallei (strain K96243).